The sequence spans 143 residues: Sirohydrochlorin cobaltochelatase (143 aa).

The active-site Proton acceptor is the His9. Position 9 (His9) interacts with Co(2+). His9 is a Ni(2+) binding site. Substrate contacts are provided by residues Glu45 and 70–75; that span reads LAHGIH. Co(2+) is bound at residue His75. His75 serves as a coordination point for Ni(2+).

Belongs to the CbiX family. CbiXS subfamily. In terms of assembly, homotetramer; dimer of dimers.

The enzyme catalyses Co-sirohydrochlorin + 2 H(+) = sirohydrochlorin + Co(2+). It carries out the reaction Ni-sirohydrochlorin + 2 H(+) = sirohydrochlorin + Ni(2+). Its pathway is cofactor biosynthesis; adenosylcobalamin biosynthesis; cob(II)yrinate a,c-diamide from sirohydrochlorin (anaerobic route): step 1/10. Catalyzes the insertion of Co(2+) into sirohydrochlorin as part of the anaerobic pathway to cobalamin biosynthesis. Involved in the biosynthesis of the unique nickel-containing tetrapyrrole coenzyme F430, the prosthetic group of methyl-coenzyme M reductase (MCR), which plays a key role in methanogenesis and anaerobic methane oxidation. Catalyzes the insertion of Ni(2+) into sirohydrochlorin to yield Ni-sirohydrochlorin. The protein is Sirohydrochlorin cobaltochelatase of Methanocaldococcus jannaschii (strain ATCC 43067 / DSM 2661 / JAL-1 / JCM 10045 / NBRC 100440) (Methanococcus jannaschii).